The following is a 174-amino-acid chain: Methylated protein MJ0556 (174 aa).

CBS domains lie at 28–87 (MISG…YLNV) and 91–156 (MLKN…IIKE).

Post-translationally, methylated at an undetermined residue between Ser-2 and Asp-26.

This is Methylated protein MJ0556 from Methanocaldococcus jannaschii (strain ATCC 43067 / DSM 2661 / JAL-1 / JCM 10045 / NBRC 100440) (Methanococcus jannaschii).